Consider the following 309-residue polypeptide: Olfactory receptor 4A47 (309 aa).

Over 1 to 23 (MEPRKNVTDFVLLGFTQNPKEQK) the chain is Extracellular. Asparagine 6 is a glycosylation site (N-linked (GlcNAc...) asparagine). Residues 24-47 (VLFVMFLLFYILTMVGNLLIVVTV) form a helical membrane-spanning segment. Topologically, residues 48 to 55 (TVSETLGS) are cytoplasmic. A helical transmembrane segment spans residues 56 to 77 (PMYFFLAGLSFIDIIYSSSISP). The Extracellular portion of the chain corresponds to 78-98 (RLISGLFFGNNSISFQSCMAQ). The N-linked (GlcNAc...) asparagine glycan is linked to asparagine 87. Cysteines 95 and 187 form a disulfide. Residues 99–118 (LFIEHIFGGSEVFLLLVMAY) traverse the membrane as a helical segment. Over 119 to 137 (DCYVAICKPLHYLVIMRQW) the chain is Cytoplasmic. The chain crosses the membrane as a helical span at residues 138 to 156 (VCVVLLVVSWVGGFLHSVF). Over 157-193 (QLSIIYGLPFCGPNVIDHFFCDMYPLLKLVCTDTHAI) the chain is Extracellular. Residues 194-217 (GLLVVANGGLACTIVFLLLLISYG) form a helical membrane-spanning segment. Topologically, residues 218-233 (VILHSLKNLSQKGRQK) are cytoplasmic. A helical membrane pass occupies residues 234–256 (ALSTCSSHMTVVVFFFVPCIFMY). The Extracellular portion of the chain corresponds to 257 to 267 (ARPARTFPIDK). The chain crosses the membrane as a helical span at residues 268-287 (SVSVFYTVITPMLNPLIYTL). Residues 288–309 (RNSEMTSAMKKLWRRDLISSST) lie on the Cytoplasmic side of the membrane.

This sequence belongs to the G-protein coupled receptor 1 family.

It is found in the cell membrane. Odorant receptor. This is Olfactory receptor 4A47 (OR4A47) from Homo sapiens (Human).